The sequence spans 782 residues: Acetazolamide conferring resistance protein zam (782 aa).

One can recognise an RNB domain in the interval 270–579 (EVALSLESQA…QRLLKLVLTE (310 aa)). One can recognise an S1 motif domain in the interval 655–736 (GEIFRGLITG…YRQQIDLGAV (82 aa)). A disordered region spans residues 737–782 (NNAPKDSANMDFDDDDEDGDEREEQDTMDWDAMEDGDDDEGGAVIF). Positions 747-782 (DFDDDDEDGDEREEQDTMDWDAMEDGDDDEGGAVIF) are enriched in acidic residues.

Belongs to the RNR ribonuclease family.

In terms of biological role, not known; control resistance to the carbonic anhydrase inhibitor acetazolamide. The sequence is that of Acetazolamide conferring resistance protein zam (zam) from Synechocystis sp. (strain ATCC 27184 / PCC 6803 / Kazusa).